Here is a 241-residue protein sequence, read N- to C-terminus: Superoxide dismutase [Mn] 2, mitochondrial (241 aa).

Residues His-60, His-108, Asp-197, and His-201 each contribute to the Mn(2+) site.

Belongs to the iron/manganese superoxide dismutase family. As to quaternary structure, homotetramer. Mn(2+) serves as cofactor.

It localises to the mitochondrion matrix. The enzyme catalyses 2 superoxide + 2 H(+) = H2O2 + O2. Its function is as follows. Destroys superoxide anion radicals which are normally produced within the cells and which are toxic to biological systems. The polypeptide is Superoxide dismutase [Mn] 2, mitochondrial (MSD2) (Arabidopsis thaliana (Mouse-ear cress)).